Here is a 96-residue protein sequence, read N- to C-terminus: Large ribosomal subunit protein bL28 (96 aa).

The protein belongs to the bacterial ribosomal protein bL28 family.

The protein is Large ribosomal subunit protein bL28 of Orientia tsutsugamushi (strain Boryong) (Rickettsia tsutsugamushi).